We begin with the raw amino-acid sequence, 109 residues long: ATPase inhibitor mai-2, mitochondrial (109 aa).

Disordered regions lie at residues 18–39 and 73–109; these read FSAG…SIRD and EEVK…LGKE. Positions 21-35 are enriched in gly residues; the sequence is GGHGDGAGRGGGSGG. Positions 55-109 form a coiled coil; the sequence is YFYKKQKAQLQELREHIQEEVKHHEGQLENHKKVLERHQQRISEIEAQERALGKE.

Belongs to the ATPase inhibitor family.

Its subcellular location is the mitochondrion. Its function is as follows. Thought to be a regulatory component of the ATP-synthesizing complex in the mitochondria. Activity is pH dependent. The polypeptide is ATPase inhibitor mai-2, mitochondrial (mai-2) (Caenorhabditis elegans).